We begin with the raw amino-acid sequence, 733 residues long: MSGSRQAGSGSAGTSPGSSAASSVTSASSSLSSSPSPPSVAASAATLVSGGVAPAAGSGGLGGPGRPVLVAAAVSGSASAGGAVSAGQSRLSCAARPSAGVGGSSSSLGSSSRKRPLLVPLCNGLLNSYEDKSNDFVCPICFDMIEEAYMTKCGHSFCYKCIHQSLEDNNRCPKCNYVVDNIDHLYPNFLVNELILKQKQRFEEKRFKLDHSVSSTNGHRWQIFQDLLGTDQDNLDLANVNLMLELLVQKKKQLEAESHAAQLQILMEFLKVARRNKREQLEQIQKELSVLEEDIKRVEEMSGLYSPVSEDSTVPQFEAPSPSHSSIIDSTEYSQPPGFSGTSQTKKQPWYNSTLASRRKRLTAHFEDLEQCYFSTRMSRISDDSRTASQLDEFQECLSKFTRYNSVRPLATLSYASDLYNGSSIVSSIEFDRDCDYFAIAGVTKKIKVYEYGTVIQDAVDIHYPENEMTCNSKISCISWSSYHKNLLASSDYEGTVILWDGFTGQRSKVYQEHEKRCWSVDFNLMDPKLLASGSDDAKVKLWSTNLDNSVASIEAKANVCCVKFSPSSRYHLAFGCADHCVHYYDLRNTKQPIMVFKGHRKAVSYAKFVSGEEIVSASTDSQLKLWNVGKPYCLRSFKGHINEKNFVGLASNGDYIACGSENNSLYLYYKGLSKTLLTFKFDTVKSVLDKDRKEDDTNEFVSAVCWRALSDGESNVLIAANSQGTIKVLELV.

Residues 1 to 43 (MSGSRQAGSGSAGTSPGSSAASSVTSASSSLSSSPSPPSVAAS) are disordered. The short motif at 111-115 (SSRKR) is the Nuclear localization signal 1 element. The RING-type zinc-finger motif lies at 138 to 176 (CPICFDMIEEAYMTKCGHSFCYKCIHQSLEDNNRCPKCN). A Nuclear localization signal 2 motif is present at residues 197–208 (KQKQRFEEKRFK). Positions 231–306 (DQDNLDLANV…RVEEMSGLYS (76 aa)) form a coiled coil. The short motif at 237 to 247 (LANVNLMLELL) is the Nuclear export signal element. The disordered stretch occupies residues 307-327 (PVSEDSTVPQFEAPSPSHSSI). WD repeat units follow at residues 421–460 (NGSS…QDAV), 470–510 (TCNS…RSKV), 513–553 (EHEK…SVAS), 555–595 (EAKA…QPIM), 599–637 (GHRK…CLRS), 640–679 (GHIN…TLLT), and 695–731 (EDDT…KVLE). Residues 645–647 (KNF) are interaction with TRIB1.

The protein belongs to the COP1 family. In terms of assembly, homodimer. Homodimerization is mediated by the coiled coil domain. Component of the DCX DET1-COP1 ubiquitin ligase complex at least composed of RBX1, DET1, DDB1, CUL4A and COP1. Isoform 2 does not interact with CUL4A but still binds to RBX1, suggesting that the interaction may be mediated by another cullin protein. Isoform 1 and isoform 2 interact with CUL5 but not with CUL1, CUL2 not CUL3. Interacts with bZIP transcription factors JUN, JUNB and JUND but not with FOS, ATF2 nor XBP1. Interacts with p53 (TP53). Interacts with COPS6; this interaction stabilizes RFWD2 through reducing its auto-ubiquitination and decelerating its turnover rate. Interacts with SFN; this interaction leads to SFN degradation. Interacts with p53/TP53 and MTA1. Interacts with TRIB1 (via C-terminus) and TRIB2.

It localises to the nucleus speckle. It is found in the cytoplasm. The enzyme catalyses S-ubiquitinyl-[E2 ubiquitin-conjugating enzyme]-L-cysteine + [acceptor protein]-L-lysine = [E2 ubiquitin-conjugating enzyme]-L-cysteine + N(6)-ubiquitinyl-[acceptor protein]-L-lysine.. It functions in the pathway protein modification; protein ubiquitination. Its activity is regulated as follows. TRIB1 competes with substrates for RFWD2 binding. Functionally, E3 ubiquitin-protein ligase that mediates ubiquitination and subsequent proteasomal degradation of target proteins. E3 ubiquitin ligases accept ubiquitin from an E2 ubiquitin-conjugating enzyme in the form of a thioester and then directly transfers the ubiquitin to targeted substrates. Involved in JUN ubiquitination and degradation. Directly involved in p53 (TP53) ubiquitination and degradation, thereby abolishing p53-dependent transcription and apoptosis. Ubiquitinates p53 independently of MDM2 or RCHY1. Probably mediates E3 ubiquitin ligase activity by functioning as the essential RING domain subunit of larger E3 complexes. In contrast, it does not constitute the catalytic RING subunit in the DCX DET1-COP1 complex that negatively regulates JUN, the ubiquitin ligase activity being mediated by RBX1. Involved in 14-3-3 protein sigma/SFN ubiquitination and proteasomal degradation, leading to AKT activation and promotion of cell survival. Ubiquitinates MTA1 leading to its proteasomal degradation. Upon binding to TRIB1, ubiquitinates CEBPA, which lacks a canonical COP1-binding motif. The polypeptide is E3 ubiquitin-protein ligase COP1 (Mus musculus (Mouse)).